A 97-amino-acid chain; its full sequence is Putative membrane protein insertion efficiency factor (97 aa).

Belongs to the UPF0161 family.

It localises to the cell membrane. In terms of biological role, could be involved in insertion of integral membrane proteins into the membrane. This Lactobacillus johnsonii (strain CNCM I-12250 / La1 / NCC 533) protein is Putative membrane protein insertion efficiency factor.